The following is a 325-amino-acid chain: Natural cytotoxicity triggering receptor 1 (325 aa).

Positions 1 to 16 (MLPTLTALLCLGLCLS) are cleaved as a signal peptide. The Extracellular portion of the chain corresponds to 17-258 (QRINTEKQTL…WDHTAQNLIR (242 aa)). Ig-like domains lie at 42–100 (GNSV…TCFY) and 137–192 (GENV…RCFG). Residues Cys-49 and Cys-98 are joined by a disulfide bond. N-linked (GlcNAc...) asparagine glycosylation is present at Asn-139. Cys-144 and Cys-190 are oxidised to a cystine. N-linked (GlcNAc...) asparagine glycosylation occurs at Asn-216. Residues 259–279 (IGLACIIVMALVWLLAEDWLS) form a helical membrane-spanning segment. Over 280–325 (RRKDHEKLNRLTSWECRGRRRMHRYHEEEQRDAISMRELKATPGDM) the chain is Cytoplasmic.

Belongs to the natural cytotoxicity receptor (NCR) family. Interacts with CD3Z and FCER1G. Weakly expressed in spleen, heart and lung.

The protein resides in the cell membrane. Its function is as follows. Cytotoxicity-activating receptor that may contribute to the increased efficiency of activated natural killer (NK) cells to mediate tumor cell lysis. The protein is Natural cytotoxicity triggering receptor 1 (Ncr1) of Rattus norvegicus (Rat).